The sequence spans 119 residues: V-type proton ATPase subunit F (119 aa).

Belongs to the V-ATPase F subunit family. As to quaternary structure, V-ATPase is a heteromultimeric enzyme made up of two complexes: the ATP-hydrolytic V1 complex and the proton translocation V0 complex. The V1 complex consists of three catalytic AB heterodimers that form a heterohexamer, three peripheral stalks each consisting of EG heterodimers, one central rotor including subunits D and F, and the regulatory subunits C and H. The proton translocation complex V0 consists of the proton transport subunit a, a ring of proteolipid subunits c9c'', rotary subunit d, subunits e and f, and the accessory subunits ATP6AP1/Ac45 and ATP6AP2/PRR. In terms of tissue distribution, expressed in brain (at protein level).

It is found in the cytoplasmic vesicle. The protein resides in the secretory vesicle. It localises to the synaptic vesicle membrane. Its subcellular location is the clathrin-coated vesicle membrane. In terms of biological role, subunit of the V1 complex of vacuolar(H+)-ATPase (V-ATPase), a multisubunit enzyme composed of a peripheral complex (V1) that hydrolyzes ATP and a membrane integral complex (V0) that translocates protons. V-ATPase is responsible for acidifying and maintaining the pH of intracellular compartments and in some cell types, is targeted to the plasma membrane, where it is responsible for acidifying the extracellular environment. In Bos taurus (Bovine), this protein is V-type proton ATPase subunit F (ATP6V1F).